Reading from the N-terminus, the 81-residue chain is D-alanyl carrier protein (81 aa).

The region spanning 1–81 (MADEAIKNGV…KIIAKVEQAQ (81 aa)) is the Carrier domain. Residue Ser-39 is modified to O-(pantetheine 4'-phosphoryl)serine.

The protein belongs to the DltC family. In terms of processing, 4'-phosphopantetheine is transferred from CoA to a specific serine of apo-DCP.

The protein resides in the cytoplasm. It participates in cell wall biogenesis; lipoteichoic acid biosynthesis. In terms of biological role, carrier protein involved in the D-alanylation of lipoteichoic acid (LTA). The loading of thioester-linked D-alanine onto DltC is catalyzed by D-alanine--D-alanyl carrier protein ligase DltA. The DltC-carried D-alanyl group is further transferred to cell membrane phosphatidylglycerol (PG) by forming an ester bond, probably catalyzed by DltD. D-alanylation of LTA plays an important role in modulating the properties of the cell wall in Gram-positive bacteria, influencing the net charge of the cell wall. The sequence is that of D-alanyl carrier protein from Lacticaseibacillus rhamnosus (Lactobacillus rhamnosus).